The sequence spans 288 residues: Elongation factor Ts (288 aa).

Residues 79–82 (TDFV) form an involved in Mg(2+) ion dislocation from EF-Tu region.

It belongs to the EF-Ts family.

It localises to the cytoplasm. Its function is as follows. Associates with the EF-Tu.GDP complex and induces the exchange of GDP to GTP. It remains bound to the aminoacyl-tRNA.EF-Tu.GTP complex up to the GTP hydrolysis stage on the ribosome. The protein is Elongation factor Ts of Ehrlichia chaffeensis (strain ATCC CRL-10679 / Arkansas).